Consider the following 49-residue polypeptide: L-amino-acid oxidase (49 aa).

FAD is bound at residue 43–44; it reads MS.

It belongs to the flavin monoamine oxidase family. FIG1 subfamily. As to quaternary structure, homodimer; non-covalently linked. FAD is required as a cofactor. In terms of processing, N-glycosylated. As to expression, expressed by the venom gland.

Its subcellular location is the secreted. It catalyses the reaction an L-alpha-amino acid + O2 + H2O = a 2-oxocarboxylate + H2O2 + NH4(+). The enzyme catalyses L-leucine + O2 + H2O = 4-methyl-2-oxopentanoate + H2O2 + NH4(+). Catalyzes an oxidative deamination of predominantly hydrophobic and aromatic L-amino acids, thus producing hydrogen peroxide that may contribute to the diverse toxic effects of this enzyme. Shows activity on L-Leu. Exhibits diverse biological activities, such as hemorrhage, hemolysis, edema, antibacterial and antiparasitic activities, as well as regulation of platelet aggregation. Its effect on platelets is controversial, since it either induces aggregation or inhibits agonist-induced aggregation. These different effects are probably due to different experimental conditions. In addition, this protein induces apoptosis and necrosis and has inhibitory effects on rat kidney function (decrease of blood flow and glomerular filtration). This is L-amino-acid oxidase from Bothrops insularis (Golden lancehead).